Reading from the N-terminus, the 739-residue chain is Sulfate transporter (739 aa).

Residues Met1–Ile27 are disordered. Ser12 and Ser16 each carry phosphoserine. 2 consecutive transmembrane segments (helical) span residues Val112–Leu132 and Pro137–Ser157. N-linked (GlcNAc...) asparagine glycosylation is found at Asn199 and Asn205. 2 helical membrane-spanning segments follow: residues Ile219–Phe239 and Gly242–Phe262. N-linked (GlcNAc...) asparagine glycosylation occurs at Asn357. Helical transmembrane passes span Leu378 to Val398, Ala420 to Leu440, Leu455 to Phe475, and Leu524 to Leu544. One can recognise an STAS domain in the interval Ala568 to Ala719.

This sequence belongs to the SLC26A/SulP transporter (TC 2.A.53) family. N-glycosylated. In terms of tissue distribution, ubiquitously expressed.

Its subcellular location is the cell membrane. The protein localises to the apical cell membrane. The enzyme catalyses oxalate(in) + sulfate(out) = oxalate(out) + sulfate(in). It catalyses the reaction sulfate(out) + 2 chloride(in) = sulfate(in) + 2 chloride(out). It carries out the reaction oxalate(out) + 2 chloride(in) = oxalate(in) + 2 chloride(out). The catalysed reaction is bromide(in) + chloride(out) = bromide(out) + chloride(in). The enzyme catalyses nitrate(in) + chloride(out) = nitrate(out) + chloride(in). It catalyses the reaction iodide(in) + chloride(out) = iodide(out) + chloride(in). With respect to regulation, an extracellular acidic pH inhibits chloride-sulfate and chloride-oxalate exchange activity whereas an intracellular acidic pH activates chloride-sulfate exchange with no effect on chloride-oxalate exchange activity. Functionally, sulfate transporter which mediates sulfate uptake into chondrocytes in order to maintain adequate sulfation of proteoglycans which is needed for cartilage development. Mediates electroneutral anion exchange of sulfate ions for oxalate ions and of sulfate and oxalate ions for chloride ions. Mediates exchange of sulfate and oxalate ions for hydroxyl ions and of chloride ions for bromide, iodide and nitrate ions. The coupling of sulfate transport to both hydroxyl and chloride ions likely serves to ensure transport at both acidic pH when most sulfate uptake is mediated by sulfate-hydroxide exchange and alkaline pH when most sulfate uptake is mediated by sulfate-chloride exchange. Essential for chondrocyte proliferation, differentiation and cell size expansion. This Homo sapiens (Human) protein is Sulfate transporter (SLC26A2).